Consider the following 273-residue polypeptide: 6-carboxyhexanoate--CoA ligase (273 aa).

It belongs to the BioW family. In terms of assembly, homodimer. Mg(2+) is required as a cofactor.

The catalysed reaction is heptanedioate + ATP + CoA = 6-carboxyhexanoyl-CoA + AMP + diphosphate. Its pathway is metabolic intermediate metabolism; pimeloyl-CoA biosynthesis; pimeloyl-CoA from pimelate: step 1/1. Functionally, catalyzes the transformation of pimelate into pimeloyl-CoA with concomitant hydrolysis of ATP to AMP. The sequence is that of 6-carboxyhexanoate--CoA ligase from Alkalihalophilus pseudofirmus (strain ATCC BAA-2126 / JCM 17055 / OF4) (Bacillus pseudofirmus).